A 529-amino-acid polypeptide reads, in one-letter code: uncharacterized protein (529 aa).

Positions D157 to D410 constitute a Radical SAM core domain. Residues C171, C176, and C179 each coordinate [4Fe-4S] cluster.

The cofactor is [4Fe-4S] cluster.

This is an uncharacterized protein from Archaeoglobus fulgidus (strain ATCC 49558 / DSM 4304 / JCM 9628 / NBRC 100126 / VC-16).